A 76-amino-acid polypeptide reads, in one-letter code: Kappa-actitoxin-Avd4o (76 aa).

The first 19 residues, 1–19 (MNKALFLSLVVLCAAVVFA), serve as a signal peptide directing secretion. The propeptide occupies 20-33 (AEDLQKAKHAPFKL). 3 disulfides stabilise this stretch: Cys-37/Cys-72, Cys-39/Cys-65, and Cys-55/Cys-73.

The protein belongs to the sea anemone type 3 (BDS) potassium channel toxin family. In terms of tissue distribution, experimental results show no expression in the ectodermal tissue from the distal and proximal tentacles, body wall, and oral disk. Since paralogs are expressed in this tissue, an expression of this toxin in this tissue is probable. The negative results could be explained by the very low abundance of EST sequences.

Its subcellular location is the secreted. It is found in the nematocyst. Its function is as follows. Blocks Kv3 voltage-gated potassium channels. Reduces blood pressure. The chain is Kappa-actitoxin-Avd4o from Anemonia viridis (Snakelocks anemone).